A 430-amino-acid polypeptide reads, in one-letter code: Adenylosuccinate synthetase (430 aa).

GTP-binding positions include 12–18 (GDEGKGK) and 40–42 (GHT). Catalysis depends on aspartate 13, which acts as the Proton acceptor. Mg(2+) is bound by residues aspartate 13 and glycine 40. IMP contacts are provided by residues 13 to 16 (DEGK), 38 to 41 (NAGH), threonine 130, arginine 144, glutamine 224, threonine 239, and arginine 303. Catalysis depends on histidine 41, which acts as the Proton donor. 299–305 (VVTGRKR) contributes to the substrate binding site. Residues arginine 305, 331-333 (KLD), and 413-415 (STS) each bind GTP.

It belongs to the adenylosuccinate synthetase family. In terms of assembly, homodimer. Requires Mg(2+) as cofactor.

Its subcellular location is the cytoplasm. It carries out the reaction IMP + L-aspartate + GTP = N(6)-(1,2-dicarboxyethyl)-AMP + GDP + phosphate + 2 H(+). It participates in purine metabolism; AMP biosynthesis via de novo pathway; AMP from IMP: step 1/2. Plays an important role in the de novo pathway of purine nucleotide biosynthesis. Catalyzes the first committed step in the biosynthesis of AMP from IMP. The sequence is that of Adenylosuccinate synthetase from Methylobacterium sp. (strain 4-46).